We begin with the raw amino-acid sequence, 264 residues long: 5'-nucleotidase SurE (264 aa).

Asp8, Asp9, Ser39, and Asn95 together coordinate a divalent metal cation.

This sequence belongs to the SurE nucleotidase family. A divalent metal cation serves as cofactor.

The protein localises to the cytoplasm. It catalyses the reaction a ribonucleoside 5'-phosphate + H2O = a ribonucleoside + phosphate. Nucleotidase that shows phosphatase activity on nucleoside 5'-monophosphates. This chain is 5'-nucleotidase SurE, found in Syntrophomonas wolfei subsp. wolfei (strain DSM 2245B / Goettingen).